Reading from the N-terminus, the 686-residue chain is L-type lectin-domain containing receptor kinase VII.1 (686 aa).

Positions 1–20 (MKALLFLLTLFLILPNPISA) are cleaved as a signal peptide. The tract at residues 21–256 (IDFIFNGFND…SHKILAWSFS (236 aa)) is legume-lectin like. Topologically, residues 21–286 (IDFIFNGFND…PKDSIVKAKW (266 aa)) are extracellular. Residues Asn-29, Asn-34, Asn-52, Asn-64, Asn-111, Asn-123, Asn-168, Asn-203, Asn-224, and Asn-259 are each glycosylated (N-linked (GlcNAc...) asparagine). Residues 287-307 (FVFVLVLICFLVVALVGLVLF) form a helical membrane-spanning segment. The Cytoplasmic segment spans residues 308 to 686 (AVVRKRLERA…SWNSSILEGR (379 aa)). The region spanning 347–628 (FDEKNVIGIG…VFEGDKAEIF (282 aa)) is the Protein kinase domain. ATP is bound by residues 353–361 (IGIGGNGKV) and Lys-376. Residue Asp-475 is the Proton acceptor of the active site.

It in the C-terminal section; belongs to the protein kinase superfamily. Ser/Thr protein kinase family. This sequence in the N-terminal section; belongs to the leguminous lectin family.

The protein localises to the cell membrane. It catalyses the reaction L-seryl-[protein] + ATP = O-phospho-L-seryl-[protein] + ADP + H(+). It carries out the reaction L-threonyl-[protein] + ATP = O-phospho-L-threonyl-[protein] + ADP + H(+). The sequence is that of L-type lectin-domain containing receptor kinase VII.1 (LECRK71) from Arabidopsis thaliana (Mouse-ear cress).